The chain runs to 441 residues: uncharacterized protein (441 aa).

A signal peptide spans 1 to 23 (MSRKYLLSLLLVGALVISVVASG). At cysteine 24 the chain carries N-acetylcysteine. Cysteine 24 carries S-archaeol cysteine lipidation.

The protein belongs to the bacterial solute-binding protein 1 family.

The protein resides in the cell membrane. Its function is as follows. Probably part of a binding-protein-dependent transport system PH1214/15/16. This is an uncharacterized protein from Pyrococcus horikoshii (strain ATCC 700860 / DSM 12428 / JCM 9974 / NBRC 100139 / OT-3).